Reading from the N-terminus, the 2273-residue chain is Acetyl-CoA carboxylase, mitochondrial (2273 aa).

The transit peptide at 1–104 directs the protein to the mitochondrion; that stretch reads KGKTITHGQS…RGNIHKHTRL (104 aa). The Biotin carboxylation domain maps to 134-635; the sequence is VISKILIANN…STGWLDDLIL (502 aa). The ATP-grasp domain maps to 292 to 484; the sequence is KTNFVSVPDD…LPATQLQIAM (193 aa). 332–337 lines the ATP pocket; it reads GGGGKG. The active site involves arginine 459. Residues 763-837 enclose the Biotinyl-binding domain; that stretch reads LEAELNPTQV…EAGDVIAKLT (75 aa). Lysine 804 is subject to N6-biotinyllysine. The CoA carboxyltransferase N-terminal domain maps to 1532 to 1867; that stretch reads PYSVKDWLQP…KRDMSPPLLE (336 aa). Residues 1532-2187 form a carboxyltransferase region; sequence PYSVKDWLQP…EGQVIKRLQK (656 aa). Positions 1776, 2080, and 2082 each coordinate CoA. A CoA carboxyltransferase C-terminal domain is found at 1871–2187; sequence RWDRDVDFKP…EGQVIKRLQK (317 aa).

Biotin is required as a cofactor.

It is found in the mitochondrion. The catalysed reaction is hydrogencarbonate + acetyl-CoA + ATP = malonyl-CoA + ADP + phosphate + H(+). It catalyses the reaction N(6)-biotinyl-L-lysyl-[protein] + hydrogencarbonate + ATP = N(6)-carboxybiotinyl-L-lysyl-[protein] + ADP + phosphate + H(+). The protein operates within lipid metabolism; malonyl-CoA biosynthesis; malonyl-CoA from acetyl-CoA: step 1/1. In terms of biological role, catalyzes the rate-limiting reaction in the mitochondrial fatty acid synthesis (FAS) type II pathway. Responsible for the production of the mitochondrial malonyl-CoA, used for the biosynthesis of the cofactor lipoic acid. This protein carries three functions: biotin carboxyl carrier protein, biotin carboxylase, and carboxyltransferase. This chain is Acetyl-CoA carboxylase, mitochondrial (HFA1), found in Saccharomyces cerevisiae (strain RM11-1a) (Baker's yeast).